Here is a 125-residue protein sequence, read N- to C-terminus: Phosphoribosyl-AMP cyclohydrolase (125 aa).

A Mg(2+)-binding site is contributed by aspartate 74. Cysteine 75 provides a ligand contact to Zn(2+). Mg(2+) contacts are provided by aspartate 76 and aspartate 78. Positions 92 and 99 each coordinate Zn(2+).

It belongs to the PRA-CH family. Homodimer. The cofactor is Mg(2+). Requires Zn(2+) as cofactor.

The protein localises to the cytoplasm. The catalysed reaction is 1-(5-phospho-beta-D-ribosyl)-5'-AMP + H2O = 1-(5-phospho-beta-D-ribosyl)-5-[(5-phospho-beta-D-ribosylamino)methylideneamino]imidazole-4-carboxamide. The protein operates within amino-acid biosynthesis; L-histidine biosynthesis; L-histidine from 5-phospho-alpha-D-ribose 1-diphosphate: step 3/9. In terms of biological role, catalyzes the hydrolysis of the adenine ring of phosphoribosyl-AMP. This is Phosphoribosyl-AMP cyclohydrolase from Geobacter sp. (strain M21).